Reading from the N-terminus, the 87-residue chain is DNA-directed RNA polymerase subunit Rpo5 (87 aa).

It belongs to the archaeal Rpo5/eukaryotic RPB5 RNA polymerase subunit family. As to quaternary structure, part of the RNA polymerase complex.

It is found in the cytoplasm. It carries out the reaction RNA(n) + a ribonucleoside 5'-triphosphate = RNA(n+1) + diphosphate. DNA-dependent RNA polymerase (RNAP) catalyzes the transcription of DNA into RNA using the four ribonucleoside triphosphates as substrates. This is DNA-directed RNA polymerase subunit Rpo5 from Thermoplasma volcanium (strain ATCC 51530 / DSM 4299 / JCM 9571 / NBRC 15438 / GSS1).